The following is a 171-amino-acid chain: Putative charged multivesicular body protein 4B-like protein CHMP4BP1 (171 aa).

The span at 1-17 (MLSKKQEFLEKKIEQRH) shows a compositional bias: basic and acidic residues. Disordered regions lie at residues 1 to 24 (MLSK…NKPA) and 132 to 171 (EQEE…KTTT).

Belongs to the SNF7 family.

The sequence is that of Putative charged multivesicular body protein 4B-like protein CHMP4BP1 (CHMP4BP1) from Homo sapiens (Human).